Reading from the N-terminus, the 389-residue chain is S-adenosylmethionine synthase (389 aa).

Position 17 (H17) interacts with ATP. D19 lines the Mg(2+) pocket. E45 contributes to the K(+) binding site. L-methionine is bound by residues E58 and Q101. Residues Q101–E111 form a flexible loop region. ATP-binding positions include D168–K170, R234–F235, D243, R249–K250, A266, and K270. D243 serves as a coordination point for L-methionine. K274 lines the L-methionine pocket.

Belongs to the AdoMet synthase family. In terms of assembly, homotetramer; dimer of dimers. Mg(2+) serves as cofactor. K(+) is required as a cofactor.

It is found in the cytoplasm. The enzyme catalyses L-methionine + ATP + H2O = S-adenosyl-L-methionine + phosphate + diphosphate. Its pathway is amino-acid biosynthesis; S-adenosyl-L-methionine biosynthesis; S-adenosyl-L-methionine from L-methionine: step 1/1. In terms of biological role, catalyzes the formation of S-adenosylmethionine (AdoMet) from methionine and ATP. The overall synthetic reaction is composed of two sequential steps, AdoMet formation and the subsequent tripolyphosphate hydrolysis which occurs prior to release of AdoMet from the enzyme. This is S-adenosylmethionine synthase from Syntrophotalea carbinolica (strain DSM 2380 / NBRC 103641 / GraBd1) (Pelobacter carbinolicus).